The chain runs to 324 residues: tRNA pseudouridine synthase B (324 aa).

Histidine 43 contributes to the substrate binding site. Catalysis depends on aspartate 48, which acts as the Nucleophile. Tyrosine 76, tyrosine 179, and leucine 200 together coordinate substrate.

It belongs to the pseudouridine synthase TruB family. Type 1 subfamily.

It catalyses the reaction uridine(55) in tRNA = pseudouridine(55) in tRNA. Functionally, responsible for synthesis of pseudouridine from uracil-55 in the psi GC loop of transfer RNAs. This is tRNA pseudouridine synthase B from Yersinia pestis bv. Antiqua (strain Nepal516).